A 778-amino-acid polypeptide reads, in one-letter code: IQ domain-containing protein E (778 aa).

2 disordered regions span residues 1-71 (MSLG…LSSR) and 83-108 (SSKQ…HPPS). Over residues 37-49 (KPPSTSPKSPYYS) the composition is skewed to low complexity. Over residues 83–101 (SSKQGSVAQPPSPTLTSEH) the composition is skewed to polar residues. Residues 157-323 (LHMQKSDVDL…DLDRMLSNSP (167 aa)) are a coiled coil. At S322 the chain carries Phosphoserine. 4 disordered regions span residues 348 to 392 (KKVS…EDLP), 443 to 462 (ETAR…LREE), 474 to 529 (EEAK…SEER), and 573 to 612 (LVRS…AEEN). Over residues 352-362 (SSESPKQSTSE) the composition is skewed to low complexity. Positions 398–486 (EEQEHLQGTV…KREEKNSFVA (89 aa)) form a coiled coil. 2 consecutive IQ domains span residues 553 to 582 (LDEA…PDSR) and 615 to 644 (QEEA…REIA). A compositionally biased stretch (low complexity) spans 581-598 (SRSPSLPGLLSPLNQSSP). A compositionally biased stretch (polar residues) spans 651-662 (TVSLTPSGSASP). Residues 651–778 (TVSLTPSGSA…LPRKKSPSPF (128 aa)) are disordered. S661 carries the post-translational modification Phosphoserine. Over residues 672–686 (IRKELCASEELRETS) the composition is skewed to basic and acidic residues. Pro residues predominate over residues 739 to 752 (PSPPELQPLSPPPV).

Component of the EvC complex composed of EFCAB7, IQCE, EVC2 and EVC; built from two subcomplexes, EVC2:EVC and EFCAB7:IQCE. Interacts (via N-terminus) with EFCAB7 (via EF-hands 1 and 2); this interaction anchors the EVC-EVC2 complex in a signaling microdomain at the base of cilia and stimulates the Hedgehog (Hh) pathway. Interacts with EVC2 (via N-terminal end). Interacts with EVC.

It is found in the cell projection. The protein localises to the cilium membrane. Its function is as follows. Component of the EvC complex that positively regulates ciliary Hedgehog (Hh) signaling. Required for proper limb morphogenesis. This is IQ domain-containing protein E (Iqce) from Mus musculus (Mouse).